The chain runs to 351 residues: uncharacterized protein (351 aa).

The protein belongs to the glycosyltransferase group 1 family. Glycosyltransferase 4 subfamily.

This is an uncharacterized protein from Methanocaldococcus jannaschii (strain ATCC 43067 / DSM 2661 / JAL-1 / JCM 10045 / NBRC 100440) (Methanococcus jannaschii).